The following is a 436-amino-acid chain: Gamma-glutamyl phosphate reductase (436 aa).

Belongs to the gamma-glutamyl phosphate reductase family.

It localises to the cytoplasm. It catalyses the reaction L-glutamate 5-semialdehyde + phosphate + NADP(+) = L-glutamyl 5-phosphate + NADPH + H(+). It participates in amino-acid biosynthesis; L-proline biosynthesis; L-glutamate 5-semialdehyde from L-glutamate: step 2/2. In terms of biological role, catalyzes the NADPH-dependent reduction of L-glutamate 5-phosphate into L-glutamate 5-semialdehyde and phosphate. The product spontaneously undergoes cyclization to form 1-pyrroline-5-carboxylate. The protein is Gamma-glutamyl phosphate reductase of Prochlorococcus marinus (strain MIT 9301).